The following is a 452-amino-acid chain: Phosphatidate cytidylyltransferase, mitochondrial (452 aa).

Belongs to the TAM41 family. The cofactor is Mg(2+).

It is found in the mitochondrion inner membrane. The enzyme catalyses a 1,2-diacyl-sn-glycero-3-phosphate + CTP + H(+) = a CDP-1,2-diacyl-sn-glycerol + diphosphate. It functions in the pathway phospholipid metabolism; CDP-diacylglycerol biosynthesis; CDP-diacylglycerol from sn-glycerol 3-phosphate: step 3/3. Its function is as follows. Catalyzes the conversion of phosphatidic acid (PA) to CDP-diacylglycerol (CDP-DAG), an essential intermediate in the synthesis of phosphatidylglycerol, cardiolipin and phosphatidylinositol. The sequence is that of Phosphatidate cytidylyltransferase, mitochondrial (TAMM41) from Homo sapiens (Human).